The sequence spans 298 residues: H-2 class I histocompatibility antigen, alpha chain (298 aa).

The Extracellular segment spans residues 1-244; the sequence is RYEPRARWIE…EPPSSTKTNT (244 aa). Asn-43 carries N-linked (GlcNAc...) asparagine glycosylation. A disulfide bond links Cys-58 and Cys-121. Residue Asn-133 is glycosylated (N-linked (GlcNAc...) asparagine). Positions 142–230 constitute an Ig-like C1-type domain; the sequence is PKAHVTHHRR…EGLPEPLTLR (89 aa). The cysteines at positions 160 and 216 are disulfide-linked. The helical transmembrane segment at 245 to 265 threads the bilayer; the sequence is VIIAVPVVLGAVVILGAVMAF. The Cytoplasmic portion of the chain corresponds to 266-298; it reads VMKRRRNTGGKGGDYALAPVSQSSDMSLPDCKV. A disordered region spans residues 277–298; sequence GGDYALAPVSQSSDMSLPDCKV. A phosphoserine mark is found at Ser-289 and Ser-292.

It belongs to the MHC class I family. As to quaternary structure, heterodimer of an alpha chain and a beta chain (beta-2-microglobulin).

Its subcellular location is the membrane. Involved in the presentation of foreign antigens to the immune system. This Mus musculus (Mouse) protein is H-2 class I histocompatibility antigen, alpha chain (H2-D1).